We begin with the raw amino-acid sequence, 463 residues long: L-seryl-tRNA(Sec) selenium transferase (463 aa).

An N6-(pyridoxal phosphate)lysine modification is found at Lys-295.

It belongs to the SelA family. In terms of assembly, homodecamer; pentamer of dimers. Binds only one seryl-tRNA(Sec) per dimer. Requires pyridoxal 5'-phosphate as cofactor.

It localises to the cytoplasm. It catalyses the reaction L-seryl-tRNA(Sec) + selenophosphate + H(+) = L-selenocysteinyl-tRNA(Sec) + phosphate. The protein operates within aminoacyl-tRNA biosynthesis; selenocysteinyl-tRNA(Sec) biosynthesis; selenocysteinyl-tRNA(Sec) from L-seryl-tRNA(Sec) (bacterial route): step 1/1. In terms of biological role, converts seryl-tRNA(Sec) to selenocysteinyl-tRNA(Sec) required for selenoprotein biosynthesis. This is L-seryl-tRNA(Sec) selenium transferase from Escherichia coli O81 (strain ED1a).